We begin with the raw amino-acid sequence, 148 residues long: Transcriptional regulator MraZ (148 aa).

SpoVT-AbrB domains follow at residues 5-51 and 80-123; these read VSIL…PEPN and AETL…NAEE.

It belongs to the MraZ family. As to quaternary structure, forms oligomers.

It is found in the cytoplasm. Its subcellular location is the nucleoid. This chain is Transcriptional regulator MraZ, found in Chromobacterium violaceum (strain ATCC 12472 / DSM 30191 / JCM 1249 / CCUG 213 / NBRC 12614 / NCIMB 9131 / NCTC 9757 / MK).